A 174-amino-acid polypeptide reads, in one-letter code: Crossover junction endodeoxyribonuclease RuvC (174 aa).

Residues aspartate 8, glutamate 69, and aspartate 141 contribute to the active site. Aspartate 8, glutamate 69, and aspartate 141 together coordinate Mg(2+).

The protein belongs to the RuvC family. As to quaternary structure, homodimer which binds Holliday junction (HJ) DNA. The HJ becomes 2-fold symmetrical on binding to RuvC with unstacked arms; it has a different conformation from HJ DNA in complex with RuvA. In the full resolvosome a probable DNA-RuvA(4)-RuvB(12)-RuvC(2) complex forms which resolves the HJ. Mg(2+) serves as cofactor.

The protein resides in the cytoplasm. It carries out the reaction Endonucleolytic cleavage at a junction such as a reciprocal single-stranded crossover between two homologous DNA duplexes (Holliday junction).. Its function is as follows. The RuvA-RuvB-RuvC complex processes Holliday junction (HJ) DNA during genetic recombination and DNA repair. Endonuclease that resolves HJ intermediates. Cleaves cruciform DNA by making single-stranded nicks across the HJ at symmetrical positions within the homologous arms, yielding a 5'-phosphate and a 3'-hydroxyl group; requires a central core of homology in the junction. The consensus cleavage sequence is 5'-(A/T)TT(C/G)-3'. Cleavage occurs on the 3'-side of the TT dinucleotide at the point of strand exchange. HJ branch migration catalyzed by RuvA-RuvB allows RuvC to scan DNA until it finds its consensus sequence, where it cleaves and resolves the cruciform DNA. The protein is Crossover junction endodeoxyribonuclease RuvC of Xanthomonas euvesicatoria pv. vesicatoria (strain 85-10) (Xanthomonas campestris pv. vesicatoria).